The primary structure comprises 332 residues: uncharacterized protein (332 aa).

This is an uncharacterized protein from Schizosaccharomyces pombe (strain 972 / ATCC 24843) (Fission yeast).